A 158-amino-acid polypeptide reads, in one-letter code: Transcriptional regulator MraZ (158 aa).

SpoVT-AbrB domains are found at residues 7 to 66 and 95 to 138; these read KEQH…EPSV and LDCV…APEK.

It belongs to the MraZ family. In terms of assembly, forms oligomers.

It localises to the cytoplasm. The protein resides in the nucleoid. The chain is Transcriptional regulator MraZ from Prosthecochloris aestuarii (strain DSM 271 / SK 413).